The chain runs to 320 residues: Ribonuclease Z (320 aa).

Positions 62, 64, 66, 67, 139, 210, and 268 each coordinate Zn(2+). Residue Asp66 is the Proton acceptor of the active site.

The protein belongs to the RNase Z family. As to quaternary structure, homodimer. The cofactor is Zn(2+).

It catalyses the reaction Endonucleolytic cleavage of RNA, removing extra 3' nucleotides from tRNA precursor, generating 3' termini of tRNAs. A 3'-hydroxy group is left at the tRNA terminus and a 5'-phosphoryl group is left at the trailer molecule.. Its function is as follows. Zinc phosphodiesterase, which displays some tRNA 3'-processing endonuclease activity. Probably involved in tRNA maturation, by removing a 3'-trailer from precursor tRNA. The polypeptide is Ribonuclease Z (Cyanothece sp. (strain PCC 7425 / ATCC 29141)).